The primary structure comprises 487 residues: Berbamunine synthase (487 aa).

Cys-429 contributes to the heme binding site.

The protein belongs to the cytochrome P450 family. The cofactor is heme.

The protein resides in the endoplasmic reticulum membrane. It is found in the microsome membrane. The enzyme catalyses (R)-N-methylcoclaurine + (S)-N-methylcoclaurine + reduced [NADPH--hemoprotein reductase] + O2 = berbamunine + oxidized [NADPH--hemoprotein reductase] + 2 H2O + H(+). Its pathway is alkaloid biosynthesis; berbamunine biosynthesis; berbamunine from (R)-N-methylcoclaurine and (S)-N-methylcoclaurine: step 1/1. In terms of biological role, forms the bisbenzylisoquinoline alkaloid berbamunine by phenol oxidation of N-methylcoclaurine without the incorporation of oxygen into the product. Oxidatively couples either two molecules of (R)-N-methylcoclaurine to form the (R,R) dimer guattegaumerine or one molecule each of (R)- and (S)-N-methylcoclaurine to form the (R,S) dimer berbamunine. This Berberis stolonifera (Barberry) protein is Berbamunine synthase (CYP80A1).